Here is a 115-residue protein sequence, read N- to C-terminus: Class I hydrophobin 21 (115 aa).

The N-terminal stretch at 1–20 is a signal peptide; that stretch reads MFAAPATMLVLAALAALSSA. 4 disulfides stabilise this stretch: Cys-30–Cys-93, Cys-37–Cys-87, Cys-38–Cys-77, and Cys-94–Cys-107.

This sequence belongs to the fungal hydrophobin family. As to quaternary structure, self-assembles to form functional amyloid fibrils called rodlets. Self-assembly into fibrillar rodlets occurs spontaneously at hydrophobic:hydrophilic interfaces and the rodlets further associate laterally to form amphipathic monolayers.

The protein localises to the secreted. The protein resides in the cell wall. In terms of biological role, aerial growth, conidiation, and dispersal of filamentous fungi in the environment rely upon a capability of their secreting small amphipathic proteins called hydrophobins (HPBs) with low sequence identity. Class I can self-assemble into an outermost layer of rodlet bundles on aerial cell surfaces, conferring cellular hydrophobicity that supports fungal growth, development and dispersal; whereas Class II form highly ordered films at water-air interfaces through intermolecular interactions but contribute nothing to the rodlet structure. The chain is Class I hydrophobin 21 from Pleurotus ostreatus (strain PC15) (Oyster mushroom).